A 308-amino-acid polypeptide reads, in one-letter code: Apolipoprotein E (308 aa).

Residues 1–18 form the signal peptide; that stretch reads MKFLWAALVVTLLAGCRA. Tandem repeats lie at residues 75–96, 97–118, 119–140, 141–162, 163–184, 185–206, 207–224, and 225–246. The interval 75–246 is 8 X 22 AA approximate tandem repeats; sequence LLIEETMKEV…RLDDMRDQME (172 aa). The LDL and other lipoprotein receptors binding stretch occupies residues 153 to 163; sequence HLRKLRKRLLR. A heparin-binding site is contributed by 157 to 160; it reads LRKR. The lipid-binding and lipoprotein association stretch occupies residues 205–281; it reads AIPPSQQLRE…SWFEPLVQDM (77 aa). 220-227 is a heparin binding site; it reads GQKVRGRL. The tract at residues 257 to 308 is homooligomerization; that stretch reads SQVRLQAEAFQTRLKSWFEPLVQDMQRQWASLVEKVQSTLGISPSTKPSKTK. The segment at 269–281 is specificity for association with VLDL; the sequence is RLKSWFEPLVQDM.

It belongs to the apolipoprotein A1/A4/E family. In terms of assembly, homotetramer. May interact with ABCA1; functionally associated with ABCA1 in the biogenesis of HDLs. May interact with APP/A4 amyloid-beta peptide; the interaction is extremely stable in vitro but its physiological significance is unclear. May interact with MAPT. May interact with MAP2. In the cerebrospinal fluid, interacts with secreted SORL1. Interacts with PMEL; this allows the loading of PMEL luminal fragment on ILVs to induce fibril nucleation. APOE exists as multiple glycosylated and sialylated glycoforms within cells and in plasma. The extent of glycosylation and sialylation are tissue and context specific. In terms of processing, glycated in plasma VLDL. Post-translationally, phosphorylated by FAM20C in the extracellular medium.

It localises to the secreted. The protein localises to the extracellular space. Its subcellular location is the extracellular matrix. The protein resides in the extracellular vesicle. It is found in the endosome. It localises to the multivesicular body. In terms of biological role, APOE is an apolipoprotein, a protein associating with lipid particles, that mainly functions in lipoprotein-mediated lipid transport between organs via the plasma and interstitial fluids. APOE is a core component of plasma lipoproteins and is involved in their production, conversion and clearance. Apolipoproteins are amphipathic molecules that interact both with lipids of the lipoprotein particle core and the aqueous environment of the plasma. As such, APOE associates with chylomicrons, chylomicron remnants, very low density lipoproteins (VLDL) and intermediate density lipoproteins (IDL) but shows a preferential binding to high-density lipoproteins (HDL). It also binds a wide range of cellular receptors including the LDL receptor/LDLR and the very low-density lipoprotein receptor/VLDLR that mediate the cellular uptake of the APOE-containing lipoprotein particles. Finally, APOE also has a heparin-binding activity and binds heparan-sulfate proteoglycans on the surface of cells, a property that supports the capture and the receptor-mediated uptake of APOE-containing lipoproteins by cells. The sequence is that of Apolipoprotein E (APOE) from Pteropus vampyrus (Large flying fox).